The chain runs to 162 residues: Sorting nexin-3 (162 aa).

Ala2 carries the N-acetylalanine modification. Positions 27-151 (NFLEIDVSNP…HMFLQDEIID (125 aa)) constitute a PX domain. Arg43 carries the omega-N-methylarginine modification. Residues Arg70, Ser72, Lys95, and Arg118 each coordinate a 1,2-diacyl-sn-glycero-3-phospho-(1D-myo-inositol-3-phosphate). Residue Ser72 is modified to Phosphoserine. Lys95 is covalently cross-linked (Glycyl lysine isopeptide (Lys-Gly) (interchain with G-Cter in SUMO2)). A binds predominantly to PtdIns(P5) and weaker to PtdIns(P3) abd PtdIns(P4); involved in neurite outgrowth regulation region spans residues 147–162 (DEIIDKSYTPSKIRHA).

Belongs to the sorting nexin family. In terms of assembly, interacts with VPS26A, VPS29 and VPS35; the interaction with VPS35 is direct. The association with the retromer CSC subcomplex subunits is proposed to represent a functional distinct retromer variant described as SNX3-retromer complex. Interacts with USP10 and SCNN1A. Interacts with TRFC. Interacts with SNX8; 2 molecules of SNX8 seems to associate with one molecule of SNX3. Interacts with PTPRU. Interacts with MON2 and DOP1B. Post-translationally, ubiquitinated, leading to its proteasomal degradation. Deubiquitinated by USP10.

Its subcellular location is the early endosome. The protein localises to the cytoplasmic vesicle. It localises to the phagosome. Its function is as follows. Phosphoinositide-binding protein required for multivesicular body formation. Specifically binds phosphatidylinositol 3-phosphate (PtdIns(P3)). Can also bind phosphatidylinositol 4-phosphate (PtdIns(P4)), phosphatidylinositol 5-phosphate (PtdIns(P5)) and phosphatidylinositol 3,5-biphosphate (PtdIns(3,5)P2). Plays a role in protein transport between cellular compartments. Together with RAB7A facilitates endosome membrane association of the retromer cargo-selective subcomplex (CSC/VPS). May in part act as component of the SNX3-retromer complex which mediates the retrograde endosome-to-TGN transport of WLS distinct from the SNX-BAR retromer pathway. Promotes stability and cell surface expression of epithelial sodium channel (ENAC) subunits SCNN1A and SCNN1G. Not involved in EGFR degradation. Involved in the regulation of phagocytosis in dendritic cells possibly by regulating EEA1 recruitment to the nascent phagosomes. Involved in iron homeostasis through regulation of endocytic recycling of the transferrin receptor TFRC presumably by delivering the transferrin:transferrin receptor complex to recycling endosomes; the function may involve the CSC retromer subcomplex. In the case of Salmonella enterica infection plays arole in maturation of the Salmonella-containing vacuole (SCV) and promotes recruitment of LAMP1 to SCVs. This Homo sapiens (Human) protein is Sorting nexin-3.